Here is a 56-residue protein sequence, read N- to C-terminus: Large ribosomal subunit protein bL33 (56 aa).

Residues 1–12 (MASKGGRDKIKL) are compositionally biased toward basic and acidic residues. Residues 1-28 (MASKGGRDKIKLESTAGTGHFYTTTKNK) form a disordered region. Positions 15–25 (TAGTGHFYTTT) are enriched in polar residues.

Belongs to the bacterial ribosomal protein bL33 family.

The chain is Large ribosomal subunit protein bL33 from Cupriavidus necator (strain ATCC 17699 / DSM 428 / KCTC 22496 / NCIMB 10442 / H16 / Stanier 337) (Ralstonia eutropha).